Here is a 222-residue protein sequence, read N- to C-terminus: Ras-related protein Rab11D (222 aa).

22–29 serves as a coordination point for GTP; the sequence is GDSAVGKS. The Effector region signature appears at 44–52; that stretch reads SKATIGVEF. GTP contacts are provided by residues 70–74 and 128–131; these read DTAGQ and NKTD. Residues Cys219 and Cys220 are each lipidated (S-geranylgeranyl cysteine).

This sequence belongs to the small GTPase superfamily. Rab family.

The protein localises to the cell membrane. The protein is Ras-related protein Rab11D (RAB11D) of Nicotiana tabacum (Common tobacco).